We begin with the raw amino-acid sequence, 196 residues long: dTTP/UTP pyrophosphatase (196 aa).

Residue D72 is the Proton acceptor of the active site.

The protein belongs to the Maf family. YhdE subfamily. A divalent metal cation serves as cofactor.

The protein localises to the cytoplasm. It carries out the reaction dTTP + H2O = dTMP + diphosphate + H(+). It catalyses the reaction UTP + H2O = UMP + diphosphate + H(+). Nucleoside triphosphate pyrophosphatase that hydrolyzes dTTP and UTP. May have a dual role in cell division arrest and in preventing the incorporation of modified nucleotides into cellular nucleic acids. The polypeptide is dTTP/UTP pyrophosphatase (Chlamydia caviae (strain ATCC VR-813 / DSM 19441 / 03DC25 / GPIC) (Chlamydophila caviae)).